Here is a 160-residue protein sequence, read N- to C-terminus: Ribosomal RNA large subunit methyltransferase H (160 aa).

S-adenosyl-L-methionine is bound by residues Leu-76 and Gly-108.

This sequence belongs to the RNA methyltransferase RlmH family. Homodimer.

It is found in the cytoplasm. It catalyses the reaction pseudouridine(1915) in 23S rRNA + S-adenosyl-L-methionine = N(3)-methylpseudouridine(1915) in 23S rRNA + S-adenosyl-L-homocysteine + H(+). In terms of biological role, specifically methylates the pseudouridine at position 1915 (m3Psi1915) in 23S rRNA. This is Ribosomal RNA large subunit methyltransferase H from Rhodopseudomonas palustris (strain BisB18).